Here is a 501-residue protein sequence, read N- to C-terminus: ATP synthase subunit alpha (501 aa).

169-176 (GDRQTGKT) serves as a coordination point for ATP.

It belongs to the ATPase alpha/beta chains family. F-type ATPases have 2 components, CF(1) - the catalytic core - and CF(0) - the membrane proton channel. CF(1) has five subunits: alpha(3), beta(3), gamma(1), delta(1), epsilon(1). CF(0) has three main subunits: a(1), b(2) and c(9-12). The alpha and beta chains form an alternating ring which encloses part of the gamma chain. CF(1) is attached to CF(0) by a central stalk formed by the gamma and epsilon chains, while a peripheral stalk is formed by the delta and b chains.

It is found in the cell membrane. The enzyme catalyses ATP + H2O + 4 H(+)(in) = ADP + phosphate + 5 H(+)(out). Produces ATP from ADP in the presence of a proton gradient across the membrane. The alpha chain is a regulatory subunit. In Streptococcus gordonii (strain Challis / ATCC 35105 / BCRC 15272 / CH1 / DL1 / V288), this protein is ATP synthase subunit alpha.